A 304-amino-acid chain; its full sequence is N-carbamoyl-D-amino acid hydrolase (304 aa).

The CN hydrolase domain maps to 5-276 (MILAVGQQGP…DEVITAAVDL (272 aa)). Residues Glu-47, Lys-127, and Cys-172 contribute to the active site.

The catalysed reaction is an N-carbamoyl-D-amino acid + H2O + 2 H(+) = a D-alpha-amino acid + NH4(+) + CO2. Its function is as follows. The enzyme catalyzes the hydrolysis of N-carbamoyl-D-amino acids to the corresponding which are useful intermediates in the preparation of beta-lactam antibiotics. Industrial production of beta-lactam antibiotics is now being developed using this enzyme. In Agrobacterium sp. (strain KNK712), this protein is N-carbamoyl-D-amino acid hydrolase.